The primary structure comprises 873 residues: Leucine--tRNA ligase (873 aa).

Residues 41–51 carry the 'HIGH' region motif; that stretch reads PYPSGRIHMGH. The short motif at 645-649 is the 'KMSKS' region element; sequence KMSKS. Lys648 serves as a coordination point for ATP.

The protein belongs to the class-I aminoacyl-tRNA synthetase family.

Its subcellular location is the cytoplasm. It catalyses the reaction tRNA(Leu) + L-leucine + ATP = L-leucyl-tRNA(Leu) + AMP + diphosphate. This Cereibacter sphaeroides (strain ATCC 17025 / ATH 2.4.3) (Rhodobacter sphaeroides) protein is Leucine--tRNA ligase.